The sequence spans 398 residues: Acetate kinase (398 aa).

A Mg(2+)-binding site is contributed by Asn9. Lys16 provides a ligand contact to ATP. Residue Arg90 participates in substrate binding. Asp147 acts as the Proton donor/acceptor in catalysis. ATP contacts are provided by residues 207 to 211, 282 to 284, and 330 to 334; these read HIGNG, DLR, and GVGEN. Glu384 contacts Mg(2+).

It belongs to the acetokinase family. In terms of assembly, homodimer. Requires Mg(2+) as cofactor. Mn(2+) is required as a cofactor.

The protein localises to the cytoplasm. The enzyme catalyses acetate + ATP = acetyl phosphate + ADP. Its pathway is metabolic intermediate biosynthesis; acetyl-CoA biosynthesis; acetyl-CoA from acetate: step 1/2. Its function is as follows. Catalyzes the formation of acetyl phosphate from acetate and ATP. Can also catalyze the reverse reaction. This is Acetate kinase from Staphylococcus carnosus (strain TM300).